The sequence spans 297 residues: 4-hydroxy-tetrahydrodipicolinate synthase (297 aa).

Threonine 45 lines the pyruvate pocket. Tyrosine 133 functions as the Proton donor/acceptor in the catalytic mechanism. Residue lysine 161 is the Schiff-base intermediate with substrate of the active site. Isoleucine 205 serves as a coordination point for pyruvate.

Belongs to the DapA family. Homotetramer; dimer of dimers.

Its subcellular location is the cytoplasm. It catalyses the reaction L-aspartate 4-semialdehyde + pyruvate = (2S,4S)-4-hydroxy-2,3,4,5-tetrahydrodipicolinate + H2O + H(+). Its pathway is amino-acid biosynthesis; L-lysine biosynthesis via DAP pathway; (S)-tetrahydrodipicolinate from L-aspartate: step 3/4. Catalyzes the condensation of (S)-aspartate-beta-semialdehyde [(S)-ASA] and pyruvate to 4-hydroxy-tetrahydrodipicolinate (HTPA). In Dichelobacter nodosus (strain VCS1703A), this protein is 4-hydroxy-tetrahydrodipicolinate synthase.